The primary structure comprises 357 residues: Membrane-bound lytic murein transglycosylase C (357 aa).

Residues 1–15 (MKKYLLLALLPFLYA) form the signal peptide. Cys16 is lipidated: N-palmitoyl cysteine. A lipid anchor (S-diacylglycerol cysteine) is attached at Cys16.

It belongs to the transglycosylase Slt family.

Its subcellular location is the cell outer membrane. It catalyses the reaction Exolytic cleavage of the (1-&gt;4)-beta-glycosidic linkage between N-acetylmuramic acid (MurNAc) and N-acetylglucosamine (GlcNAc) residues in peptidoglycan, from either the reducing or the non-reducing ends of the peptidoglycan chains, with concomitant formation of a 1,6-anhydrobond in the MurNAc residue.. Functionally, murein-degrading enzyme. May play a role in recycling of muropeptides during cell elongation and/or cell division. This is Membrane-bound lytic murein transglycosylase C from Haemophilus influenzae (strain ATCC 51907 / DSM 11121 / KW20 / Rd).